Reading from the N-terminus, the 901-residue chain is Alpha-actinin-3 (901 aa).

Residue methionine 1 is modified to N-acetylmethionine. The interval 1–261 (MMMVLQPEGL…IMTYVSCFYH (261 aa)) is actin-binding. 2 Calponin-homology (CH) domains span residues 45–149 (KQQR…LRFA) and 158–264 (TSAK…HAFA). Spectrin repeat units follow at residues 288 to 398 (KLME…WLLS), 408 to 513 (HLAE…ALER), 523 to 634 (QLQL…MLQE), and 644 to 747 (RLRR…EVEN). EF-hand domains are found at residues 760 to 795 (EQLN…MGYD) and 796 to 831 (LGEV…ETAE). Ca(2+) is bound by residues aspartate 773, asparagine 777, methionine 779, aspartate 784, aspartate 809, and asparagine 811.

This sequence belongs to the alpha-actinin family. In terms of assembly, homodimer; antiparallel. Also forms heterodimers with ACTN2. Interacts with MYOZ1.

F-actin cross-linking protein which is thought to anchor actin to a variety of intracellular structures. This is a bundling protein. This Bos taurus (Bovine) protein is Alpha-actinin-3 (ACTN3).